A 298-amino-acid polypeptide reads, in one-letter code: Isochorismatase domain-containing protein 1 (298 aa).

The residue at position 160 (tyrosine 160) is a Phosphotyrosine. Lysine 279 bears the N6-succinyllysine mark.

Belongs to the isochorismatase family.

The protein is Isochorismatase domain-containing protein 1 (ISOC1) of Bos taurus (Bovine).